A 35-amino-acid chain; its full sequence is MTLAGYRVDSCNGCGKAYLVGESHDRKKCAECASK.

This chain is Putative gene 58 protein (58), found in Bacillus phage SP01 (Bacteriophage SP01).